The sequence spans 675 residues: Cytoplasmic tyrosine-protein kinase BMX (675 aa).

The 108-residue stretch at 4 to 111 (KSILEELLLK…WLKALQKEIR (108 aa)) folds into the PH domain. A Btk-type zinc finger spans residues 113 to 149 (NPHLLVKYHSGFFVDGKFLCCQQSCKAAPGCTLWEAY). H121, C132, C133, and C143 together coordinate Zn(2+). Phosphotyrosine; by autocatalysis occurs at positions 216 and 224. Residues 296–392 (WFAGNISRSQ…GMITRLRHPV (97 aa)) form the SH2 domain. Positions 417–675 (ITLLKELGSG…IEPLREKDKH (259 aa)) constitute a Protein kinase domain. Residues 423-431 (LGSGQFGVV) and K445 each bind ATP. D536 (proton acceptor) is an active-site residue. Y566 carries the post-translational modification Phosphotyrosine; by SRC and autocatalysis. Residues 596 to 603 (WAFGILMW) carry the CAV1-binding motif.

The protein belongs to the protein kinase superfamily. Tyr protein kinase family. TEC subfamily. As to quaternary structure, interacts with BCAR1, CAV1, MYD88, PTK2/FAK1, RUFY1, RUFY2, STAT3, TIRAP and TNFRSF1B. It depends on Zn(2+) as a cofactor. Post-translationally, phosphorylated in response to protein I/II and to LPS. Phosphorylation at Tyr-566 by SRC and by autocatalysis leads to activation and is required for STAT3 phosphorylation by BMX. Highly expressed in cells with great migratory potential, including endothelial cells and metastatic carcinoma cell lines.

Its subcellular location is the cytoplasm. The enzyme catalyses L-tyrosyl-[protein] + ATP = O-phospho-L-tyrosyl-[protein] + ADP + H(+). TEK and vascular endothelial growth factor receptor 1 (FLT1) stimulate BMX tyrosine kinase activity. Activated by integrins through the mediation of PTK2/FAK1. Activated by TNF through the mediation of TNFRSF1B. In terms of biological role, non-receptor tyrosine kinase that plays central but diverse modulatory roles in various signaling processes involved in the regulation of actin reorganization, cell migration, cell proliferation and survival, cell adhesion, and apoptosis. Participates in signal transduction stimulated by growth factor receptors, cytokine receptors, G-protein coupled receptors, antigen receptors and integrins. Induces tyrosine phosphorylation of BCAR1 in response to integrin regulation. Activation of BMX by integrins is mediated by PTK2/FAK1, a key mediator of integrin signaling events leading to the regulation of actin cytoskeleton and cell motility. Plays a critical role in TNF-induced angiogenesis, and implicated in the signaling of TEK and FLT1 receptors, 2 important receptor families essential for angiogenesis. Required for the phosphorylation and activation of STAT3, a transcription factor involved in cell differentiation. Also involved in interleukin-6 (IL6) induced differentiation. Also plays a role in programming adaptive cytoprotection against extracellular stress in different cell systems, salivary epithelial cells, brain endothelial cells, and dermal fibroblasts. May be involved in regulation of endocytosis through its interaction with an endosomal protein RUFY1. May also play a role in the growth and differentiation of hematopoietic cells; as well as in signal transduction in endocardial and arterial endothelial cells. This Homo sapiens (Human) protein is Cytoplasmic tyrosine-protein kinase BMX (BMX).